The primary structure comprises 257 residues: Zinc import ATP-binding protein ZnuC (257 aa).

The 216-residue stretch at isoleucine 6 to threonine 221 folds into the ABC transporter domain. Glycine 38–threonine 45 is an ATP binding site.

The protein belongs to the ABC transporter superfamily. Zinc importer (TC 3.A.1.15.5) family. The complex is composed of two ATP-binding proteins (ZnuC), two transmembrane proteins (ZnuB) and a solute-binding protein (ZnuA).

The protein localises to the cell inner membrane. The catalysed reaction is Zn(2+)(out) + ATP(in) + H2O(in) = Zn(2+)(in) + ADP(in) + phosphate(in) + H(+)(in). Part of the ABC transporter complex ZnuABC involved in zinc import. Responsible for energy coupling to the transport system. The sequence is that of Zinc import ATP-binding protein ZnuC from Pseudomonas putida (strain ATCC 47054 / DSM 6125 / CFBP 8728 / NCIMB 11950 / KT2440).